The sequence spans 379 residues: Cytochrome b (379 aa).

Transmembrane regions (helical) follow at residues 33–53 (FGSL…FLAM), 77–98 (WLIR…YLHI), 113–133 (WNIG…GYVL), and 178–198 (FFAF…IHLL). Residues histidine 83 and histidine 97 each coordinate heme b. Heme b is bound by residues histidine 182 and histidine 196. Histidine 201 is a binding site for a ubiquinone. 4 helical membrane passes run 226–246 (YKDL…ALFY), 288–308 (LGGV…PILH), 320–340 (ASQL…WIGG), and 347–367 (YIII…VLNP).

Belongs to the cytochrome b family. The cytochrome bc1 complex contains 3 respiratory subunits (MT-CYB, CYC1 and UQCRFS1), 2 core proteins (UQCRC1 and UQCRC2) and probably 6 low-molecular weight proteins. Heme b serves as cofactor.

Its subcellular location is the mitochondrion inner membrane. Its function is as follows. Component of the ubiquinol-cytochrome c reductase complex (complex III or cytochrome b-c1 complex) that is part of the mitochondrial respiratory chain. The b-c1 complex mediates electron transfer from ubiquinol to cytochrome c. Contributes to the generation of a proton gradient across the mitochondrial membrane that is then used for ATP synthesis. This Anguilla dieffenbachii (New Zealand longfin eel) protein is Cytochrome b (mt-cyb).